The sequence spans 855 residues: Pre-mRNA-splicing factor SYF1 (855 aa).

9 HAT repeats span residues 15–47, 48–80, 90–122, 124–158, 160–192, 198–230, 235–268, 270–305, and 369–407; these read LVFE…FKQG, APKP…ARRA, PAYE…FLMD, GRVT…FLRS, PLPE…SSDR, QRLA…LISQ, VQSL…YYIR, GHFE…FEES, and GRPR…FYED. At Lys420 the chain carries N6-acetyllysine. HAT repeat units follow at residues 498–530, 532–566, 571–605, 643–677, and 679–713; these read GTFQ…FLEE, KYFE…KFIA, RKLE…LEEE, YGVT…MECK, and GEID…FEVR. Residues 810–855 are disordered; the sequence is LAQQVNPEEIQLGEDEDEDEMDLEPNEVRLEQQSVPAAVFGSLKED. Residues 820 to 834 are compositionally biased toward acidic residues; the sequence is QLGEDEDEDEMDLEP. Ser851 bears the Phosphoserine mark.

Belongs to the crooked-neck family. Associates with RNA polymerase II, the TCR-specific proteins CKN1/CSA and ERCC6/CSB, and XPA. Identified in the spliceosome C complex. Component of the XAB2 complex, a multimeric protein complex composed of XAB2, PRPF19, AQR, ZNF830, ISY1, and PPIE. Identified in a pentameric intron-binding (IB) complex composed of AQR, XAB2, ISY1, ZNF830 and PPIE that is incorporated into the spliceosome as a preassembled complex. The IB complex does not contain PRPF19.

It is found in the nucleus. Involved in pre-mRNA splicing as component of the spliceosome. Involved in transcription-coupled repair (TCR), transcription and pre-mRNA splicing. This Homo sapiens (Human) protein is Pre-mRNA-splicing factor SYF1 (XAB2).